The following is a 586-amino-acid chain: Lamin-B1 (586 aa).

The tract at residues 1–31 (MATATPVPPRMGSRAGGPTTPLSPTRLSRLQ) is disordered. Ala2 carries the N-acetylalanine modification. The head stretch occupies residues 2 to 34 (ATATPVPPRMGSRAGGPTTPLSPTRLSRLQEKE). Thr3 and Thr5 each carry phosphothreonine. Arg14 is modified (omega-N-methylarginine). Thr20 is subject to Phosphothreonine. Ser23 is modified (phosphoserine). Phosphothreonine is present on Thr25. The residue at position 28 (Ser28) is a Phosphoserine. The IF rod domain maps to 32 to 388 (EKEELRELND…KLLEGEEERL (357 aa)). The tract at residues 35–69 (ELRELNDRLAVYIDKVRSLETENSALQLQVTEREE) is coil 1A. Positions 70 to 81 (VRGRELTGLKAL) are linker 1. Residues 82-215 (YETELADARR…EFRKSMYEEE (134 aa)) are coil 1B. Lys102 is covalently cross-linked (Glycyl lysine isopeptide (Lys-Gly) (interchain with G-Cter in SUMO2)). The residue at position 111 (Lys111) is an N6-acetyllysine. A Glycyl lysine isopeptide (Lys-Gly) (interchain with G-Cter in SUMO2) cross-link involves residue Lys123. A Phosphoserine modification is found at Ser126. Lys145 participates in a covalent cross-link: Glycyl lysine isopeptide (Lys-Gly) (interchain with G-Cter in SUMO2). Residue Lys157 is modified to N6-acetyllysine; alternate. Residue Lys157 forms a Glycyl lysine isopeptide (Lys-Gly) (interchain with G-Cter in SUMO2); alternate linkage. Residue Ser158 is modified to Phosphoserine. Lys181 is covalently cross-linked (Glycyl lysine isopeptide (Lys-Gly) (interchain with G-Cter in SUMO2)). 3 positions are modified to phosphoserine: Ser200, Ser210, and Ser232. Residues 216 to 243 (INETRRKHETRLVEVDSGRQIEYEYKLA) are linker 2. Glycyl lysine isopeptide (Lys-Gly) (interchain with G-Cter in SUMO2) cross-links involve residues Lys241 and Lys261. Residues 244 to 386 (QALHEMREQH…YRKLLEGEEE (143 aa)) form a coil 2 region. Lys271 is subject to N6-acetyllysine; alternate. Residue Lys271 forms a Glycyl lysine isopeptide (Lys-Gly) (interchain with G-Cter in SUMO2); alternate linkage. 2 positions are modified to phosphoserine: Ser278 and Ser302. Lys312 is covalently cross-linked (Glycyl lysine isopeptide (Lys-Gly) (interchain with G-Cter in SUMO2)). Position 330 is an N6-acetyllysine; alternate (Lys330). Residue Lys330 forms a Glycyl lysine isopeptide (Lys-Gly) (interchain with G-Cter in SUMO2); alternate linkage. Ser375 and Ser393 each carry phosphoserine. Positions 387 to 586 (RLKLSPSPSS…RASNRSCAIM (200 aa)) are tail. A disordered region spans residues 388 to 432 (LKLSPSPSSRVTVSRASSSRSVRTTRGKRKRVDVEESEASSSVSI). A compositionally biased stretch (low complexity) spans 390–409 (LSPSPSSRVTVSRASSSRSV). A glycan (O-linked (GlcNAc) threonine) is linked at Thr399. Omega-N-methylarginine is present on Arg413. Residues 415–420 (KRKRVD) carry the Nuclear localization signal motif. One can recognise an LTD domain in the interval 430 to 546 (VSISHSASAT…EEVAQRSTVF (117 aa)). N6-acetyllysine is present on Lys483. Lys532 is covalently cross-linked (Glycyl lysine isopeptide (Lys-Gly) (interchain with G-Cter in SUMO2)). Ser534 carries the phosphoserine modification. Lys547 participates in a covalent cross-link: Glycyl lysine isopeptide (Lys-Gly) (interchain with G-Cter in SUMO2). Phosphothreonine is present on Thr575. Cys583 is subject to Cysteine methyl ester. Cys583 carries S-farnesyl cysteine lipidation. The propeptide at 584 to 586 (AIM) is removed in mature form.

The protein belongs to the intermediate filament family. In terms of assembly, homodimer. Lamin dimers then assemble into dimeric head-to-tail polymers. Ultimately, two head-to-tail polymers assemble laterally into a protofilament with a uniformly shaped rod of 3.5 nm in diameter. Interacts with SPAG4 and SEPT12. In terms of processing, B-type lamins undergo a series of modifications, such as farnesylation and phosphorylation. Increased phosphorylation of the lamins occurs before envelope disintegration and probably plays a role in regulating lamin associations. Post-translationally, phosphorylation plays a key role in lamin organization, subcellular localization and nuclear envelope disintegration. Phosphorylation by CDK1 at Ser-23 and Ser-393 at the onset of mitosis drives lamin disassembly and nuclear envelope breakdown.

The protein resides in the nucleus lamina. Lamins are intermediate filament proteins that assemble into a filamentous meshwork, and which constitute the major components of the nuclear lamina, a fibrous layer on the nucleoplasmic side of the inner nuclear membrane. Lamins provide a framework for the nuclear envelope, bridging the nuclear envelope and chromatin, thereby playing an important role in nuclear assembly, chromatin organization, nuclear membrane and telomere dynamics. The structural integrity of the lamina is strictly controlled by the cell cycle, as seen by the disintegration and formation of the nuclear envelope in prophase and telophase, respectively. The sequence is that of Lamin-B1 (LMNB1) from Homo sapiens (Human).